We begin with the raw amino-acid sequence, 193 residues long: Protein CURVATURE THYLAKOID 1D, chloroplastic (193 aa).

The transit peptide at 1–51 directs the protein to the chloroplast; that stretch reads MELCTRSTTIITHLPASFNGHGYLAGKSVDRISLPLQRNVASLVLQSRTLR. Residues 52–117 lie on the Stromal side of the membrane; it reads CSRKFPGETV…NDIKLDSDKT (66 aa). A helical transmembrane segment spans residues 118-138; the sequence is YSILLYGSGAIVALYLTSAIV. Topologically, residues 139–142 are lumenal; it reads SSLE. The chain crosses the membrane as a helical span at residues 143-163; that stretch reads AIPLFPKLMEVVGLGYTLWFT. At 164–193 the chain is on the stromal side; that stretch reads TRYLLFKRNREELKTKVSEIKKQVLGSDSE.

It belongs to the CURT family. Homo- and heterodimers and trimers.

The protein resides in the plastid. The protein localises to the chloroplast thylakoid membrane. Determines thylakoid architecture by inducing membrane curvature. The sequence is that of Protein CURVATURE THYLAKOID 1D, chloroplastic (CURT1D) from Arabidopsis thaliana (Mouse-ear cress).